The following is a 109-amino-acid chain: Nucleoid-associated protein ASA_2087 (109 aa).

2 disordered regions span residues 1-23 and 87-109; these read MFGK…RMQK and QSKS…KLPF. Residues 11–23 are compositionally biased toward low complexity; it reads MKQAQQMQERMQK.

Belongs to the YbaB/EbfC family. As to quaternary structure, homodimer.

Its subcellular location is the cytoplasm. It is found in the nucleoid. Functionally, binds to DNA and alters its conformation. May be involved in regulation of gene expression, nucleoid organization and DNA protection. In Aeromonas salmonicida (strain A449), this protein is Nucleoid-associated protein ASA_2087.